Here is a 201-residue protein sequence, read N- to C-terminus: FMN-dependent NADH:quinone oxidoreductase (201 aa).

FMN-binding positions include Ser-10, 16-18 (SQS), 96-99 (MYNF), and 140-143 (SRGG).

Belongs to the azoreductase type 1 family. Homodimer. FMN is required as a cofactor.

The catalysed reaction is 2 a quinone + NADH + H(+) = 2 a 1,4-benzosemiquinone + NAD(+). The enzyme catalyses N,N-dimethyl-1,4-phenylenediamine + anthranilate + 2 NAD(+) = 2-(4-dimethylaminophenyl)diazenylbenzoate + 2 NADH + 2 H(+). Quinone reductase that provides resistance to thiol-specific stress caused by electrophilic quinones. Its function is as follows. Also exhibits azoreductase activity. Catalyzes the reductive cleavage of the azo bond in aromatic azo compounds to the corresponding amines. This Shigella flexneri serotype 5b (strain 8401) protein is FMN-dependent NADH:quinone oxidoreductase.